The following is a 566-amino-acid chain: Class II hydrophobin FOXG_02748 (566 aa).

The signal sequence occupies residues 1 to 22; sequence MKSKSIMAASTVMELALAQASA. 4 disulfides stabilise this stretch: cysteine 497-cysteine 546, cysteine 507-cysteine 537, cysteine 508-cysteine 520, and cysteine 547-cysteine 558.

It belongs to the cerato-ulmin hydrophobin family. As to quaternary structure, homodimer. Homodimers further self-assemble to form highly ordered films at water-air interfaces through intermolecular interactions.

It is found in the secreted. The protein localises to the cell wall. Aerial growth, conidiation, and dispersal of filamentous fungi in the environment rely upon a capability of their secreting small amphipathic proteins called hydrophobins (HPBs) with low sequence identity. Class I can self-assemble into an outermost layer of rodlet bundles on aerial cell surfaces, conferring cellular hydrophobicity that supports fungal growth, development and dispersal; whereas Class II form highly ordered films at water-air interfaces through intermolecular interactions but contribute nothing to the rodlet structure. FOXG_02748 is a class II hydrophobin that is likely required for plant colonization. In Fusarium oxysporum f. sp. lycopersici (strain 4287 / CBS 123668 / FGSC 9935 / NRRL 34936) (Fusarium vascular wilt of tomato), this protein is Class II hydrophobin FOXG_02748.